Here is a 29-residue protein sequence, read N- to C-terminus: Cytochrome b6-f complex subunit 8 (29 aa).

The helical transmembrane segment at 3–23 (ILTLGWVSLLVVFTWSIAMVV) threads the bilayer.

Belongs to the PetN family. In terms of assembly, the 4 large subunits of the cytochrome b6-f complex are cytochrome b6, subunit IV (17 kDa polypeptide, PetD), cytochrome f and the Rieske protein, while the 4 small subunits are PetG, PetL, PetM and PetN. The complex functions as a dimer.

The protein resides in the cellular thylakoid membrane. Its function is as follows. Component of the cytochrome b6-f complex, which mediates electron transfer between photosystem II (PSII) and photosystem I (PSI), cyclic electron flow around PSI, and state transitions. In Nostoc punctiforme (strain ATCC 29133 / PCC 73102), this protein is Cytochrome b6-f complex subunit 8.